A 255-amino-acid chain; its full sequence is Leucyl/phenylalanyl-tRNA--protein transferase (255 aa).

It belongs to the L/F-transferase family.

It is found in the cytoplasm. It catalyses the reaction N-terminal L-lysyl-[protein] + L-leucyl-tRNA(Leu) = N-terminal L-leucyl-L-lysyl-[protein] + tRNA(Leu) + H(+). The catalysed reaction is N-terminal L-arginyl-[protein] + L-leucyl-tRNA(Leu) = N-terminal L-leucyl-L-arginyl-[protein] + tRNA(Leu) + H(+). It carries out the reaction L-phenylalanyl-tRNA(Phe) + an N-terminal L-alpha-aminoacyl-[protein] = an N-terminal L-phenylalanyl-L-alpha-aminoacyl-[protein] + tRNA(Phe). Its function is as follows. Functions in the N-end rule pathway of protein degradation where it conjugates Leu, Phe and, less efficiently, Met from aminoacyl-tRNAs to the N-termini of proteins containing an N-terminal arginine or lysine. In Burkholderia pseudomallei (strain 668), this protein is Leucyl/phenylalanyl-tRNA--protein transferase.